A 614-amino-acid chain; its full sequence is Acid phosphatase (614 aa).

Residues Met-1–Pro-22 form the signal peptide. A Fibronectin type-III domain is found at Ile-80–Pro-176. Asn-110, Asn-161, Asn-242, Asn-295, Asn-333, Asn-340, Asn-352, Asn-408, Asn-429, Asn-512, Asn-523, Asn-559, and Asn-578 each carry an N-linked (GlcNAc...) asparagine glycan. Residues Val-606 to Ser-614 constitute a propeptide that is removed on maturation.

Monomer. Requires Cu cation as cofactor. In terms of processing, glycosylated; probably with N-linked high-mannose oligosaccharides.

The protein resides in the secreted. It carries out the reaction a phosphate monoester + H2O = an alcohol + phosphate. Competitively inhibited by phosphomycin and inorganic orthophosphate. The polypeptide is Acid phosphatase (aphA) (Aspergillus ficuum).